The primary structure comprises 612 residues: Glucoamylase (612 aa).

The N-terminal stretch at 1-19 (MVSFSSCLRALALGSSVLA) is a signal peptide. A propeptide spanning residues 20–25 (VQPVLR) is cleaved from the precursor. N-linked (GlcNAc...) asparagine glycosylation is present at N39. W146 is a binding site for substrate. D202 functions as the Proton acceptor in the catalytic mechanism. The active-site Proton donor is the E205. 3 cysteine pairs are disulfide-bonded: C236/C239, C248/C475, and C288/C296. The 107-residue stretch at 506–612 (CQVPTTVSVT…KSAVQSDVWR (107 aa)) folds into the CBM20 domain.

Belongs to the glycosyl hydrolase 15 family.

The catalysed reaction is Hydrolysis of terminal (1-&gt;4)-linked alpha-D-glucose residues successively from non-reducing ends of the chains with release of beta-D-glucose.. The protein is Glucoamylase (glaA) of Aspergillus oryzae (strain ATCC 42149 / RIB 40) (Yellow koji mold).